Reading from the N-terminus, the 112-residue chain is Large ribosomal subunit protein P2-B (112 aa).

The disordered stretch occupies residues 89-112; it reads APAAADAKKEEEEEDDDMGFGLFD.

It belongs to the eukaryotic ribosomal protein P1/P2 family. In terms of assembly, P1 and P2 exist as dimers at the large ribosomal subunit. In terms of processing, phosphorylated.

In terms of biological role, plays an important role in the elongation step of protein synthesis. This chain is Large ribosomal subunit protein P2-B, found in Trypanosoma cruzi.